Here is a 235-residue protein sequence, read N- to C-terminus: RNA pyrophosphohydrolase (235 aa).

Residues 6 to 149 (GFRPNVGIIL…KRGVYEMALT (144 aa)) enclose the Nudix hydrolase domain. Residues 38 to 59 (GGIDRGENPEQAMFRELHEEVG) carry the Nudix box motif. Positions 184 to 235 (ANQSGEPGSFPAAGGIPSYATRPGAPFELPPGATFEPDPQTSFGVNAPTKKT) are disordered.

Belongs to the Nudix hydrolase family. RppH subfamily. Requires a divalent metal cation as cofactor.

Functionally, accelerates the degradation of transcripts by removing pyrophosphate from the 5'-end of triphosphorylated RNA, leading to a more labile monophosphorylated state that can stimulate subsequent ribonuclease cleavage. This chain is RNA pyrophosphohydrolase, found in Polaromonas naphthalenivorans (strain CJ2).